The following is a 317-amino-acid chain: Acetyl-coenzyme A carboxylase carboxyl transferase subunit alpha (317 aa).

One can recognise a CoA carboxyltransferase C-terminal domain in the interval 31 to 292; the sequence is RFEPELAQLE…DKALWATLTS (262 aa).

This sequence belongs to the AccA family. Acetyl-CoA carboxylase is a heterohexamer composed of biotin carboxyl carrier protein (AccB), biotin carboxylase (AccC) and two subunits each of ACCase subunit alpha (AccA) and ACCase subunit beta (AccD).

The protein localises to the cytoplasm. It carries out the reaction N(6)-carboxybiotinyl-L-lysyl-[protein] + acetyl-CoA = N(6)-biotinyl-L-lysyl-[protein] + malonyl-CoA. It participates in lipid metabolism; malonyl-CoA biosynthesis; malonyl-CoA from acetyl-CoA: step 1/1. Its function is as follows. Component of the acetyl coenzyme A carboxylase (ACC) complex. First, biotin carboxylase catalyzes the carboxylation of biotin on its carrier protein (BCCP) and then the CO(2) group is transferred by the carboxyltransferase to acetyl-CoA to form malonyl-CoA. In Sorangium cellulosum (strain So ce56) (Polyangium cellulosum (strain So ce56)), this protein is Acetyl-coenzyme A carboxylase carboxyl transferase subunit alpha.